The primary structure comprises 176 residues: Small ribosomal subunit protein uS5 (176 aa).

Residues 18–81 (FEEKMLFVNR…SIARKNMISV (64 aa)) enclose the S5 DRBM domain.

Belongs to the universal ribosomal protein uS5 family. As to quaternary structure, part of the 30S ribosomal subunit. Contacts proteins S4 and S8.

Its function is as follows. With S4 and S12 plays an important role in translational accuracy. Located at the back of the 30S subunit body where it stabilizes the conformation of the head with respect to the body. The chain is Small ribosomal subunit protein uS5 from Deinococcus deserti (strain DSM 17065 / CIP 109153 / LMG 22923 / VCD115).